The chain runs to 120 residues: Protein FAM241B (120 aa).

A disordered region spans residues 12 to 59; it reads QDDDPRVRTTTQHRSSSSQQGFFNRGHGAPPGGPGPRQQQAGARLGAA. Low complexity-rich tracts occupy residues 19–39 and 47–59; these read RTTT…RGHG and PRQQ…LGAA. At serine 61 the chain carries Phosphoserine. The chain crosses the membrane as a helical span at residues 91–111; it reads ILLLFLLMMLGVRGLLLVGLV.

The protein belongs to the FAM241 family.

It localises to the membrane. Functionally, may play a role in lysosome homeostasis. The polypeptide is Protein FAM241B (Mus musculus (Mouse)).